We begin with the raw amino-acid sequence, 338 residues long: Bifunctional methylenetetrahydrofolate dehydrogenase/cyclohydrolase 2, mitochondrial (338 aa).

Residues 89-93 (YVRNK) and 136-138 (VQL) contribute to the substrate site. Residues 205–207 (GRS) and Arg-238 each bind NAD(+). 314–318 (PGGVG) contacts substrate.

Belongs to the tetrahydrofolate dehydrogenase/cyclohydrolase family. The cofactor is Mg(2+). As to expression, widely expressed.

It localises to the mitochondrion inner membrane. It carries out the reaction (6R)-5,10-methylene-5,6,7,8-tetrahydrofolate + NADP(+) = (6R)-5,10-methenyltetrahydrofolate + NADPH. It catalyses the reaction (6R)-5,10-methylene-5,6,7,8-tetrahydrofolate + NAD(+) = (6R)-5,10-methenyltetrahydrofolate + NADH. The catalysed reaction is (6R)-5,10-methenyltetrahydrofolate + H2O = (6R)-10-formyltetrahydrofolate + H(+). The protein operates within one-carbon metabolism; tetrahydrofolate interconversion. In terms of biological role, bifunctional mitochondrial folate-interconverting enzyme that has both NAD/NADP-dependent methylenetetrahydrofolate dehydrogenase and methenyltetrahydrofolate cyclohydrolase activities. Functionally, has no NAD/NADP-dependent methylenetetrahydrofolate dehydrogenase activity. In Rattus norvegicus (Rat), this protein is Bifunctional methylenetetrahydrofolate dehydrogenase/cyclohydrolase 2, mitochondrial.